A 360-amino-acid chain; its full sequence is UPF0283 membrane protein Oant_2119 (360 aa).

Residues 1–30 (MTEKTPRKPASFTVSQASNRPEAADEAPRR) are disordered. Transmembrane regions (helical) follow at residues 77 to 97 (ILFGALGILVSFAIGIWTEDL) and 108 to 128 (LGWTALGVAIIALAAFIAIVV).

Belongs to the UPF0283 family.

The protein resides in the cell inner membrane. The polypeptide is UPF0283 membrane protein Oant_2119 (Brucella anthropi (strain ATCC 49188 / DSM 6882 / CCUG 24695 / JCM 21032 / LMG 3331 / NBRC 15819 / NCTC 12168 / Alc 37) (Ochrobactrum anthropi)).